A 311-amino-acid polypeptide reads, in one-letter code: Homeobox protein knotted-1-like 10 (311 aa).

Disordered regions lie at residues M1–T45 and L153–D184. Over residues S12 to A22 the composition is skewed to gly residues. In terms of domain architecture, ELK spans E197–F217. Positions L218–S281 form a DNA-binding region, homeobox; TALE-type.

The protein belongs to the TALE/KNOX homeobox family.

The protein localises to the nucleus. In terms of biological role, probable transcription factor that may be involved in shoot formation during embryogenesis. The polypeptide is Homeobox protein knotted-1-like 10 (OSH71) (Oryza sativa subsp. indica (Rice)).